The chain runs to 272 residues: Shikimate dehydrogenase (NADP(+)) (272 aa).

Residues 14 to 16 (SKS) and Thr61 contribute to the shikimate site. Lys65 (proton acceptor) is an active-site residue. Glu77 is an NADP(+) binding site. Residues Asn86 and Asp102 each coordinate shikimate. NADP(+) contacts are provided by residues 126 to 130 (GAGGA), 149 to 154 (NRTASR), and Met213. Tyr215 provides a ligand contact to shikimate. Residue Gly237 coordinates NADP(+).

The protein belongs to the shikimate dehydrogenase family. In terms of assembly, homodimer.

The catalysed reaction is shikimate + NADP(+) = 3-dehydroshikimate + NADPH + H(+). The protein operates within metabolic intermediate biosynthesis; chorismate biosynthesis; chorismate from D-erythrose 4-phosphate and phosphoenolpyruvate: step 4/7. Involved in the biosynthesis of the chorismate, which leads to the biosynthesis of aromatic amino acids. Catalyzes the reversible NADPH linked reduction of 3-dehydroshikimate (DHSA) to yield shikimate (SA). This is Shikimate dehydrogenase (NADP(+)) from Salmonella typhimurium (strain LT2 / SGSC1412 / ATCC 700720).